Reading from the N-terminus, the 83-residue chain is U-actitoxin-Aeq6a (83 aa).

A signal peptide spans 1–20 (MIYKAVFVCLVLVLLGDVFC). A propeptide spanning residues 21–36 (SPRNSGGGTLNDNPFE) is cleaved from the precursor. At Pro-82 the chain carries Proline amide.

Contains 3 disulfide bonds. As to expression, expressed by acrorhagi.

It is found in the secreted. The protein localises to the nematocyst. Toxin. The sequence is that of U-actitoxin-Aeq6a from Actinia equina (Beadlet anemone).